A 691-amino-acid chain; its full sequence is WD repeat-containing protein 48 homolog (691 aa).

8 WD repeats span residues 27–82 (LHRS…PVQY), 88–130 (RHTD…YLDS), 133–168 (LHTD…NSNF), 180–219 (GCKN…KPMK), 222–261 (GHSD…NIAT), 264–303 (AHEE…KFQV), 306–347 (KEEA…QNSN), and 399–438 (SGAP…KVKE).

This sequence belongs to the WD repeat WDR48 family. As to quaternary structure, interacts with usp-46; the interaction increases the catalytic activity of usp-46 in the presence of wdr-20.

Its function is as follows. Together with wdr-20, binds to and stimulates the activity of the deubiquitinating enzyme usp-46, leading to deubiquitination and stabilization of the glr-1 glutamate receptor. The polypeptide is WD repeat-containing protein 48 homolog (wdr-48) (Caenorhabditis briggsae).